A 78-amino-acid chain; its full sequence is Apolipoprotein C-I (78 aa).

A signal peptide spans 1–26 (MRLILWLPVLVVVLLMVLEGPAPAQG).

The protein belongs to the apolipoprotein C1 family.

The protein resides in the secreted. Functionally, inhibitor of lipoprotein binding to the low density lipoprotein (LDL) receptor, LDL receptor-related protein, and very low density lipoprotein (VLDL) receptor. Associates with high density lipoproteins (HDL) and the triacylglycerol-rich lipoproteins in the plasma and makes up about 10% of the protein of the VLDL and 2% of that of HDL. Appears to interfere directly with fatty acid uptake and is also the major plasma inhibitor of cholesteryl ester transfer protein (CETP). Binds free fatty acids and reduces their intracellular esterification. Modulates the interaction of APOE with beta-migrating VLDL and inhibits binding of beta-VLDL to the LDL receptor-related protein. This chain is Apolipoprotein C-I (APOC1), found in Puma concolor (Mountain lion).